Consider the following 66-residue polypeptide: Beta-toxin Cll1m (66 aa).

One can recognise an LCN-type CS-alpha/beta domain in the interval K1–T66. Disulfide bonds link C12-C65, C16-C41, C25-C46, and C29-C48. T66 bears the Threonine amide mark.

Belongs to the long (4 C-C) scorpion toxin superfamily. Sodium channel inhibitor family. Beta subfamily. As to expression, expressed by the venom gland.

The protein localises to the secreted. Its function is as follows. Beta toxins bind voltage-independently at site-4 of sodium channels (Nav) and shift the voltage of activation toward more negative potentials thereby affecting sodium channel activation and promoting spontaneous and repetitive firing. The chain is Beta-toxin Cll1m from Centruroides limpidus (Mexican scorpion).